The following is a 394-amino-acid chain: Phosphoglycerate kinase (394 aa).

Residues 21–23 (DFN), Arg36, 59–62 (HLGR), Arg118, and Arg151 contribute to the substrate site. A Phosphoserine modification is found at Ser183. Lys201 lines the ATP pocket. At Thr299 the chain carries Phosphothreonine. ATP-binding positions include Glu323 and 350–353 (GGDS).

This sequence belongs to the phosphoglycerate kinase family. As to quaternary structure, monomer.

It localises to the cytoplasm. The catalysed reaction is (2R)-3-phosphoglycerate + ATP = (2R)-3-phospho-glyceroyl phosphate + ADP. The protein operates within carbohydrate degradation; glycolysis; pyruvate from D-glyceraldehyde 3-phosphate: step 2/5. The sequence is that of Phosphoglycerate kinase from Shouchella clausii (strain KSM-K16) (Alkalihalobacillus clausii).